A 152-amino-acid polypeptide reads, in one-letter code: Ribonuclease H (152 aa).

Residues 6-147 (KKNRVIAYTD…ADELANKAIA (142 aa)) enclose the RNase H type-1 domain. Residues aspartate 15, glutamate 53, aspartate 75, and aspartate 139 each contribute to the Mg(2+) site.

It belongs to the RNase H family. Monomer. It depends on Mg(2+) as a cofactor.

The protein resides in the cytoplasm. It carries out the reaction Endonucleolytic cleavage to 5'-phosphomonoester.. Functionally, endonuclease that specifically degrades the RNA of RNA-DNA hybrids. In Francisella tularensis subsp. tularensis (strain FSC 198), this protein is Ribonuclease H.